A 374-amino-acid polypeptide reads, in one-letter code: MTTDAILLTPGPLTTSSRTKQSMLRDWGSWDTDFNAITARLRQGLLRIVHGEGTHECVPLQGSGTFSVEAAIGTLVPPGEKGGHVLVPVNGAYCQRIAKICKVLGRKLTTFEYAEDAQIRPEDIDRLLAKDPSITHVALVHCETSTGILNPLHEIALVVQRHGKGLIVDAMSSFGALEIDARKTPFDAVVAASGKCLEGVPGMGFVLARRAALERCEGNCHSLAMDLYDQWVYMNKTTQWRFTPPTHVVAALDAALTQYFEQGGLAARGGAYAKNCRELISGLAGLGLRSFLPAAIQAPIIVTFHAPASPAYEFKAFYNAVRQRGYILYPGKLTAVETFRVGCMGQLGARGMAGAVEAVRDALQEMGLELANAE.

At Lys195 the chain carries N6-(pyridoxal phosphate)lysine.

Belongs to the class-V pyridoxal-phosphate-dependent aminotransferase family. PhnW subfamily. As to quaternary structure, homodimer. It depends on pyridoxal 5'-phosphate as a cofactor.

The catalysed reaction is (2-aminoethyl)phosphonate + pyruvate = phosphonoacetaldehyde + L-alanine. Involved in phosphonate degradation. In Polaromonas sp. (strain JS666 / ATCC BAA-500), this protein is 2-aminoethylphosphonate--pyruvate transaminase 1.